Reading from the N-terminus, the 247-residue chain is DNA polymerase sliding clamp 1 (247 aa).

It belongs to the PCNA family. Homotrimer. The subunits circularize to form a toroid; DNA passes through its center. Replication factor C (RFC) is required to load the toroid on the DNA.

Functionally, sliding clamp subunit that acts as a moving platform for DNA processing. Responsible for tethering the catalytic subunit of DNA polymerase and other proteins to DNA during high-speed replication. The chain is DNA polymerase sliding clamp 1 from Sulfolobus acidocaldarius (strain ATCC 33909 / DSM 639 / JCM 8929 / NBRC 15157 / NCIMB 11770).